We begin with the raw amino-acid sequence, 311 residues long: Putative F-box protein At3g28280 (311 aa).

Positions M1–L43 constitute an F-box domain.

This chain is Putative F-box protein At3g28280, found in Arabidopsis thaliana (Mouse-ear cress).